A 591-amino-acid chain; its full sequence is Probable translation initiation factor IF-2 (591 aa).

One can recognise a tr-type G domain in the interval 7–223 (LRTPIVCVMG…LLGLAQKFLE (217 aa)). Residues 16–23 (GHVDHGKT) are G1. 16-23 (GHVDHGKT) provides a ligand contact to GTP. The interval 41–45 (AITQH) is G2. The tract at residues 78-81 (DTPG) is G3. Residues 78–82 (DTPGH) and 132–135 (NKID) contribute to the GTP site. A G4 region spans residues 132 to 135 (NKID). The segment at 200–202 (SAF) is G5.

It belongs to the TRAFAC class translation factor GTPase superfamily. Classic translation factor GTPase family. IF-2 subfamily.

In terms of biological role, function in general translation initiation by promoting the binding of the formylmethionine-tRNA to ribosomes. Seems to function along with eIF-2. The protein is Probable translation initiation factor IF-2 of Methanosarcina mazei (strain ATCC BAA-159 / DSM 3647 / Goe1 / Go1 / JCM 11833 / OCM 88) (Methanosarcina frisia).